The primary structure comprises 320 residues: Alpha/beta hydrolase domain-containing protein 17C (320 aa).

Residues 50–75 are disordered; sequence RAPAPAATPAPAPAAQPAPAEEGAGP. Positions 55–65 are enriched in pro residues; the sequence is AATPAPAPAAQ. Active-site charge relay system residues include Ser-202, Asp-267, and His-296.

The protein belongs to the AB hydrolase superfamily. ABHD17 family. In terms of processing, palmitoylated on cysteine residues located in a cysteine cluster at the N-terminus which promotes membrane localization. Palmitoylation is required for post-synaptic localization and for depalmitoylating activity towards DLG4/PSD95.

It is found in the recycling endosome membrane. The protein resides in the cell projection. Its subcellular location is the dendritic spine. The protein localises to the postsynaptic density membrane. The enzyme catalyses S-hexadecanoyl-L-cysteinyl-[protein] + H2O = L-cysteinyl-[protein] + hexadecanoate + H(+). In terms of biological role, hydrolyzes fatty acids from S-acylated cysteine residues in proteins. Has depalmitoylating activity towards DLG4/PSD95. The sequence is that of Alpha/beta hydrolase domain-containing protein 17C from Mus musculus (Mouse).